A 305-amino-acid polypeptide reads, in one-letter code: Small ribosomal subunit protein uS3 (305 aa).

The region spanning 17 to 86 (IDEFFSEELS…DPQVDVQEVD (70 aa)) is the KH type-2 domain. Composition is skewed to acidic residues over residues 207 to 262 (EPEG…EAET) and 272 to 305 (AAEE…EEET). The disordered stretch occupies residues 207 to 305 (EPEGDVEELL…EDETTDEEET (99 aa)).

It belongs to the universal ribosomal protein uS3 family. Part of the 30S ribosomal subunit.

Its function is as follows. Binds the lower part of the 30S subunit head. In Natronomonas pharaonis (strain ATCC 35678 / DSM 2160 / CIP 103997 / JCM 8858 / NBRC 14720 / NCIMB 2260 / Gabara) (Halobacterium pharaonis), this protein is Small ribosomal subunit protein uS3.